We begin with the raw amino-acid sequence, 359 residues long: Photosystem II protein D1 3 (359 aa).

The next 3 membrane-spanning stretches (helical) occupy residues 29–46, 118–133, and 142–156; these read YVGW…AATI, HFLI…EWEL, and WICV…AASA. Residue His118 participates in chlorophyll a binding. Residue Tyr126 coordinates pheophytin a. [CaMn4O5] cluster is bound by residues Asp170 and Glu189. Residues 197-218 form a helical membrane-spanning segment; it reads FHMLGVAGVFGGSLFSAMHGSL. Position 198 (His198) interacts with chlorophyll a. A quinone is bound by residues His215 and 264-265; that span reads SF. His215 lines the Fe cation pocket. His272 serves as a coordination point for Fe cation. Residues 274 to 288 form a helical membrane-spanning segment; sequence FLAAWPVVGIWFTAL. Residues His332, Glu333, Asp342, and Ala344 each contribute to the [CaMn4O5] cluster site. A propeptide spanning residues 345–359 is cleaved from the precursor; sequence AAESTPVALQVPAIG.

This sequence belongs to the reaction center PufL/M/PsbA/D family. In terms of assembly, PSII is composed of 1 copy each of membrane proteins PsbA, PsbB, PsbC, PsbD, PsbE, PsbF, PsbH, PsbI, PsbJ, PsbK, PsbL, PsbM, PsbT, PsbX, PsbY, PsbZ, Psb30/Ycf12, peripheral proteins PsbO, CyanoQ (PsbQ), PsbU, PsbV and a large number of cofactors. It forms dimeric complexes. The D1/D2 heterodimer binds P680, chlorophylls that are the primary electron donor of PSII, and subsequent electron acceptors. It shares a non-heme iron and each subunit binds pheophytin, quinone, additional chlorophylls, carotenoids and lipids. D1 provides most of the ligands for the Mn4-Ca-O5 cluster of the oxygen-evolving complex (OEC). There is also a Cl(-1) ion associated with D1 and D2, which is required for oxygen evolution. The PSII complex binds additional chlorophylls, carotenoids and specific lipids. serves as cofactor. Post-translationally, tyr-161 forms a radical intermediate that is referred to as redox-active TyrZ, YZ or Y-Z. C-terminally processed by CtpA; processing is essential to allow assembly of the oxygen-evolving complex and thus photosynthetic growth.

It is found in the cellular thylakoid membrane. It carries out the reaction 2 a plastoquinone + 4 hnu + 2 H2O = 2 a plastoquinol + O2. In terms of biological role, photosystem II (PSII) is a light-driven water:plastoquinone oxidoreductase that uses light energy to abstract electrons from H(2)O, generating O(2) and a proton gradient subsequently used for ATP formation. It consists of a core antenna complex that captures photons, and an electron transfer chain that converts photonic excitation into a charge separation. The D1/D2 (PsbA/PsbD) reaction center heterodimer binds P680, the primary electron donor of PSII as well as several subsequent electron acceptors. This chain is Photosystem II protein D1 3, found in Parasynechococcus marenigrum (strain WH8102).